An 81-amino-acid polypeptide reads, in one-letter code: A-kinase anchor protein 7 isoform alpha (81 aa).

Gly2 carries the N-myristoyl glycine lipid modification. The interval 2-11 (GQLCCFPFAR) is required for membrane localization. S-palmitoyl cysteine attachment occurs at residues Cys5 and Cys6. Residues 29-42 (LVRLSKRLVENAVL) are RII-binding. The tract at residues 49-81 (LEETQNKKQPGEGNSTKAEEGDRNGDGSDNNRK) is disordered. Over residues 65-81 (KAEEGDRNGDGSDNNRK) the composition is skewed to basic and acidic residues.

In terms of assembly, binds cAMP-dependent protein kinase (PKA). Interacts with PRKCA; only the cytoplasmic form is capable of interacting with PRKCA.

It is found in the lateral cell membrane. Functionally, targets the cAMP-dependent protein kinase (PKA) to the plasma membrane, and permits functional coupling to the L-type calcium channel. The membrane-associated form reduces epithelial sodium channel (ENaC) activity, whereas the free cytoplasmic form may negatively regulate ENaC channel feedback inhibition by intracellular sodium. This is A-kinase anchor protein 7 isoform alpha (Akap7) from Mus musculus (Mouse).